A 79-amino-acid polypeptide reads, in one-letter code: Conotoxin ArMSGL-0123 (79 aa).

The N-terminal stretch at 1-20 is a signal peptide; the sequence is MSRLGIMVLTLLLLVFIVTS. Residues 21–44 constitute a propeptide that is removed on maturation; it reads HQDAGEKQATKRAAVNFRWRRSFT. 3 cysteine pairs are disulfide-bonded: Cys-52–Cys-64, Cys-56–Cys-73, and Cys-63–Cys-77. Position 78 is a leucine amide (Leu-78).

The protein belongs to the conotoxin O3 superfamily. Expressed by the venom duct.

It is found in the secreted. This is Conotoxin ArMSGL-0123 from Conus arenatus (Sand-dusted cone).